The sequence spans 485 residues: NADH-quinone oxidoreductase subunit N (485 aa).

Transmembrane regions (helical) follow at residues 8–28 (LIALLPLLIVGLTVVVVMLSI), 35–55 (FLNATLSVIGLNAALVSLWFV), 71–91 (GFAMLYTGLVLLASLATCTFA), 105–125 (FYLLVLIAALGGILLANANHL), 127–147 (SLFLGIELISLPLFGLVGYAF), 159–179 (YTILSAAASSFLLFGMALVYA), 203–223 (LLAGFGMMIVGLGFKLSLVPF), 235–255 (PAPVSTFLATASKIAIFGVVM), 271–291 (VVLAIIAFASIIFGNLMALSQ), 297–317 (LLGYSSISHLGYLLVALIALQ), 326–346 (VGVYLAGYLFSSLGAFGVVSL), 373–393 (AAVMTVMMLSLAGIPMTLGFI), 408–430 (WWLVGAVVVGSAIGLYYYLRVAV), and 450–470 (YSAGGIVVLISALLVLVLGVW).

Belongs to the complex I subunit 2 family. As to quaternary structure, NDH-1 is composed of 13 different subunits. Subunits NuoA, H, J, K, L, M, N constitute the membrane sector of the complex.

The protein resides in the cell inner membrane. The catalysed reaction is a quinone + NADH + 5 H(+)(in) = a quinol + NAD(+) + 4 H(+)(out). In terms of biological role, NDH-1 shuttles electrons from NADH, via FMN and iron-sulfur (Fe-S) centers, to quinones in the respiratory chain. The immediate electron acceptor for the enzyme in this species is believed to be ubiquinone. Couples the redox reaction to proton translocation (for every two electrons transferred, four hydrogen ions are translocated across the cytoplasmic membrane), and thus conserves the redox energy in a proton gradient. This chain is NADH-quinone oxidoreductase subunit N, found in Shigella boydii serotype 4 (strain Sb227).